We begin with the raw amino-acid sequence, 337 residues long: Pyridoxal 5'-phosphate synthase subunit PdxS (337 aa).

Asp-63 provides a ligand contact to D-ribose 5-phosphate. The active-site Schiff-base intermediate with D-ribose 5-phosphate is Lys-120. Gly-192 lines the D-ribose 5-phosphate pocket. Lys-204 serves as a coordination point for D-glyceraldehyde 3-phosphate. Residues Gly-253 and 274–275 (GS) each bind D-ribose 5-phosphate.

This sequence belongs to the PdxS/SNZ family. In terms of assembly, in the presence of PdxT, forms a dodecamer of heterodimers.

The enzyme catalyses aldehydo-D-ribose 5-phosphate + D-glyceraldehyde 3-phosphate + L-glutamine = pyridoxal 5'-phosphate + L-glutamate + phosphate + 3 H2O + H(+). The protein operates within cofactor biosynthesis; pyridoxal 5'-phosphate biosynthesis. In terms of biological role, catalyzes the formation of pyridoxal 5'-phosphate from ribose 5-phosphate (RBP), glyceraldehyde 3-phosphate (G3P) and ammonia. The ammonia is provided by the PdxT subunit. Can also use ribulose 5-phosphate and dihydroxyacetone phosphate as substrates, resulting from enzyme-catalyzed isomerization of RBP and G3P, respectively. In Aeropyrum pernix (strain ATCC 700893 / DSM 11879 / JCM 9820 / NBRC 100138 / K1), this protein is Pyridoxal 5'-phosphate synthase subunit PdxS.